The chain runs to 1143 residues: FH2 domain-containing protein 1 (1143 aa).

The segment at 16-89 is disordered; sequence GNIATAPGFM…PPTTHMNGYS (74 aa). Composition is skewed to pro residues over residues 29–46 and 56–80; these read TPPP…PSPP and SSPP…PGLP. Positions 87–482 constitute an FH2 domain; it reads GYSHLGKKKR…QLQRLKEQEQ (396 aa). Phosphoserine is present on Ser-500. Residues 517-638 form a disordered region; sequence PFLHPRPISP…NHASAFPRAR (122 aa). Residues 521–534 are compositionally biased toward low complexity; it reads PRPISPSSPSYRPP. Residues Ser-650, Ser-660, and Ser-664 each carry the phosphoserine modification. Positions 706–1143 are disordered; the sequence is LESVGHRGPQ…LGRILNPLRK (438 aa). Low complexity predominate over residues 806–818; sequence GSMSSGVGEMGDS. Basic and acidic residues predominate over residues 848 to 861; sequence LPRDKPTKRKDVVA. A compositionally biased stretch (polar residues) spans 925–947; it reads RGPSQNPPSSTDTVWSRQNSVRR. The span at 958-968 shows a compositional bias: low complexity; sequence PRGSSGSSSTR. Residues 960–1086 form an MTBD; microtubule-binding domain region; it reads GSSGSSSTRP…DAAPKDSSTL (127 aa). Basic and acidic residues predominate over residues 995 to 1018; sequence QKPEENKTCRAHSEGPESPKEEPK. Positions 1036-1046 are enriched in polar residues; that stretch reads ARNTVASSSRS. Composition is skewed to basic and acidic residues over residues 1071–1080 and 1117–1130; these read VKGDPEDAAP and GAGE…KDSS.

Interacts with CEP170.

The protein resides in the cell projection. It localises to the cilium. It is found in the golgi apparatus. Its function is as follows. Microtubule-associated formin which regulates both actin and microtubule dynamics. Induces microtubule acetylation and stabilization and actin stress fiber formation. Regulates Golgi ribbon formation. Required for normal cilia assembly. Early in cilia assembly, may assist in the maturation and positioning of the centrosome/basal body, and once cilia assembly has initiated, may also promote cilia elongation by inhibiting disassembly. The chain is FH2 domain-containing protein 1 (FHDC1) from Homo sapiens (Human).